The primary structure comprises 227 residues: Transcriptional regulatory protein CusR (227 aa).

The Response regulatory domain maps to 2 to 116; it reads KLLIVEDEKK…ELLARVRTLL (115 aa). Aspartate 51 is subject to 4-aspartylphosphate. The segment at residues 125 to 223 is a DNA-binding region (ompR/PhoB-type); it reads ESQFQVADLM…VRGVGYMLEV (99 aa).

In terms of processing, phosphorylated by CusS.

The protein localises to the cytoplasm. Functionally, member of the two-component regulatory system CusS/CusR involved in response to copper and silver. The chain is Transcriptional regulatory protein CusR (cusR) from Escherichia coli O6:H1 (strain CFT073 / ATCC 700928 / UPEC).